The chain runs to 829 residues: MAPSQKRKAIDDDFILTISDNEEDIPLEEEQEVVPRKKAKTATQQSNKQKKKNNKKSKKQQQTEDDDDEAETKEDDAADLGIWGDNDEDDGAMDTEFQFVVDGQNEVDAEFDGWGFEGAHKGVVKGANAGGDKKAVDIDEIIRRRRERKAAKEGKTTATKEEEDKMEVDEEEDDIEEIDVDLDDDEDGVLADDAFGMGVGSDVEEEEEKQDAKMGGVDGEDEDSEGEDGEKKGEDEDEGDASDDDSVATAVEHPDDVQSSDDEEGIDEEEEAKMKEFFAPEEENQPKKKGEMSSFQEMSLSRPILRGLTSVGFTKPTPIQAKTIPISLMGKDVVGGAVTGSGKTAAFVVPILERLLYRPKKVPTTRVVILTPTRELAIQCHAVAVKLASHTDIKFCLAVGGLSLKVQEAELRLRPDVVIATPGRFIDHMRNSASFAVDTIEILVLDEADRMLEDGFADELNEILTTLPKSRQTMLFSATMTSSVDRLIRAGLNKPVRIMADSQKKTAGTLVQEFVRLRPGRESKREGYLLHICKTIYTERVIIFFRQKKIAHKMRIIFGLFGLSCAELHGSMNQAQRIQSVEDFRDGKVNFLLATDLASRGLDIKGVDTVINYEAPQTPEIYVHRVGRTARAGRSGTAITLAAEPDRKVVKAAVKAGKSQGAKISSRIIDPADADKWQAEIDELEDEIEEIMQEEKEEKQLQNMEMQVKKGENMIKYEDEISSRPKRTWFETQEDKKKAKAAGRAELNGVRDKLKSKNEGKLSNKDRKKLDTMQERKQERTYKKGSAERAGKGAVLNLKKVVKKVGRSAGPKKKGGNAGKGGKGKGRRK.

Disordered regions lie at residues 1 to 96 (MAPS…MDTE) and 145 to 295 (RRER…MSSF). The span at 20-32 (DNEEDIPLEEEQE) shows a compositional bias: acidic residues. Basic residues predominate over residues 48 to 59 (KQKKKNNKKSKK). Residues 63 to 78 (TEDDDDEAETKEDDAA) are compositionally biased toward acidic residues. The span at 150–163 (AAKEGKTTATKEEE) shows a compositional bias: basic and acidic residues. Acidic residues-rich tracts occupy residues 164-190 (DKMEVDEEEDDIEEIDVDLDDDEDGVL), 218-228 (DGEDEDSEGED), 235-246 (DEDEGDASDDDS), and 258-271 (QSSDDEEGIDEEEE). Residues 272-291 (AKMKEFFAPEEENQPKKKGE) show a composition bias toward basic and acidic residues. The Q motif signature appears at 293-321 (SSFQEMSLSRPILRGLTSVGFTKPTPIQA). The 175-residue stretch at 324-498 (IPISLMGKDV…RAGLNKPVRI (175 aa)) folds into the Helicase ATP-binding domain. ATP is bound at residue 337–344 (AVTGSGKT). Positions 446-449 (DEAD) match the DEAD box motif. The 180-residue stretch at 528–707 (YLLHICKTIY…EKQLQNMEMQ (180 aa)) folds into the Helicase C-terminal domain. Residues 728-829 (TWFETQEDKK…KGGKGKGRRK (102 aa)) form a disordered region. A compositionally biased stretch (basic and acidic residues) spans 749 to 791 (GVRDKLKSKNEGKLSNKDRKKLDTMQERKQERTYKKGSAERAG). Over residues 800 to 815 (KVVKKVGRSAGPKKKG) the composition is skewed to basic residues.

The protein belongs to the DEAD box helicase family. DDX27/DRS1 subfamily. As to quaternary structure, associates with pre-ribosomal particles.

The protein resides in the nucleus. It is found in the nucleolus. The catalysed reaction is ATP + H2O = ADP + phosphate + H(+). In terms of biological role, ATP-binding RNA helicase involved in ribosome assembly. This chain is ATP-dependent RNA helicase drs1 (drh-11), found in Neurospora crassa (strain ATCC 24698 / 74-OR23-1A / CBS 708.71 / DSM 1257 / FGSC 987).